Consider the following 282-residue polypeptide: Putative polysaccharide deacetylase YheN (282 aa).

The chain crosses the membrane as a helical span at residues Leu-15 to Leu-35. In terms of domain architecture, NodB homology spans Lys-85 to Gly-271.

This sequence belongs to the polysaccharide deacetylase family.

The protein resides in the cell membrane. The polypeptide is Putative polysaccharide deacetylase YheN (yheN) (Bacillus subtilis (strain 168)).